Consider the following 200-residue polypeptide: MNDFTLNAQARTDLGKGASRRLRHAANIPAVVYGGNKPAESVTILSKEIAKLFENEAAYSHVIELNVDGTKQNVIVKAMQRHPSKQFIMHADFVRVVAGQKLTAIVPVHFVGEDAPVKKGGVVSHTATELEVTCLPKDLPEFIEVDLSAAEIGTIIHLSDLKAPKGVEFVALAHNDDKAVANVHAPRVVAEDEEGETAAE.

It belongs to the bacterial ribosomal protein bL25 family. CTC subfamily. As to quaternary structure, part of the 50S ribosomal subunit; part of the 5S rRNA/L5/L18/L25 subcomplex. Contacts the 5S rRNA. Binds to the 5S rRNA independently of L5 and L18.

Its function is as follows. This is one of the proteins that binds to the 5S RNA in the ribosome where it forms part of the central protuberance. The sequence is that of Large ribosomal subunit protein bL25 from Pseudomonas fluorescens (strain SBW25).